Reading from the N-terminus, the 209-residue chain is MTAIERFLSTCTTPEIAVSLLGKQLRLQTSSGVLTAWITETEAYLGARDAGAHAYQNHQTPRNHALWQSAGTIYIYQMRAWCLLNIVTQAAGTPECVLIRGIEPDAGLERMQQQRPVPIANLTNGPGKLMQALGLDKTLNGQALQPATLSLDLSHYRQPEQVVATPRIGIVNKGEWTTAPLRYFVAGNPFVSKISRRTIDHEHHGWMTR.

The protein belongs to the DNA glycosylase MPG family.

The sequence is that of Putative 3-methyladenine DNA glycosylase from Lactiplantibacillus plantarum (strain ATCC BAA-793 / NCIMB 8826 / WCFS1) (Lactobacillus plantarum).